The following is a 207-amino-acid chain: Large ribosomal subunit protein uL4 (207 aa).

Residues 45–78 (RQGTHKTKNRAEVSGGGRKPWRQKGTGRARQGSI) are disordered.

The protein belongs to the universal ribosomal protein uL4 family. In terms of assembly, part of the 50S ribosomal subunit.

One of the primary rRNA binding proteins, this protein initially binds near the 5'-end of the 23S rRNA. It is important during the early stages of 50S assembly. It makes multiple contacts with different domains of the 23S rRNA in the assembled 50S subunit and ribosome. In terms of biological role, forms part of the polypeptide exit tunnel. In Geobacillus sp. (strain WCH70), this protein is Large ribosomal subunit protein uL4.